The primary structure comprises 159 residues: Ribosomal RNA large subunit methyltransferase H (159 aa).

Residues Leu76, Gly108, and 127 to 132 each bind S-adenosyl-L-methionine; that span reads FGLLTL.

This sequence belongs to the RNA methyltransferase RlmH family. As to quaternary structure, homodimer.

The protein localises to the cytoplasm. The enzyme catalyses pseudouridine(1915) in 23S rRNA + S-adenosyl-L-methionine = N(3)-methylpseudouridine(1915) in 23S rRNA + S-adenosyl-L-homocysteine + H(+). Specifically methylates the pseudouridine at position 1915 (m3Psi1915) in 23S rRNA. In Leuconostoc mesenteroides subsp. mesenteroides (strain ATCC 8293 / DSM 20343 / BCRC 11652 / CCM 1803 / JCM 6124 / NCDO 523 / NBRC 100496 / NCIMB 8023 / NCTC 12954 / NRRL B-1118 / 37Y), this protein is Ribosomal RNA large subunit methyltransferase H.